The chain runs to 114 residues: MAVNLYDYANQLEQALRDSDEYKAIKDAFSKVKDNEESKKLFDEFRETQLSFQQKQMQGEEIPEEDLAKAQEQAQAIEKDENISELMQAEQKMSQVFQEINQIIVKPLDEIYAD.

This sequence belongs to the UPF0342 family.

The chain is UPF0342 protein SH1117 from Staphylococcus haemolyticus (strain JCSC1435).